Consider the following 260-residue polypeptide: 5-oxoprolinase subunit A (260 aa).

Belongs to the LamB/PxpA family. Forms a complex composed of PxpA, PxpB and PxpC.

The enzyme catalyses 5-oxo-L-proline + ATP + 2 H2O = L-glutamate + ADP + phosphate + H(+). In terms of biological role, catalyzes the cleavage of 5-oxoproline to form L-glutamate coupled to the hydrolysis of ATP to ADP and inorganic phosphate. The sequence is that of 5-oxoprolinase subunit A from Methylococcus capsulatus (strain ATCC 33009 / NCIMB 11132 / Bath).